The chain runs to 63 residues: uncharacterized protein (63 aa).

The tract at residues 35–63 (PKPDSLISEHPTAQEAMDAKKRYEDPDKE) is disordered. Residues 51 to 63 (MDAKKRYEDPDKE) are compositionally biased toward basic and acidic residues.

This is an uncharacterized protein from Escherichia coli O157:H7.